A 90-amino-acid chain; its full sequence is uncharacterized protein (90 aa).

Residues 1-26 form a disordered region; sequence MFKRSVSRLFCAPAPAPAPRKQPGGR. Residues 33 to 66 adopt a coiled-coil conformation; that stretch reads NLNQSVKKQLNHLEVLERIKKQRKEQKNNRNQVD.

This is an uncharacterized protein from Dictyostelium discoideum (Social amoeba).